The chain runs to 72 residues: Beta-defensin 104 (72 aa).

Residues 1-22 form the signal peptide; sequence MQRLVLLLAISLLLYQDLPVRS. Disulfide bonds link C30-C57, C37-C51, and C41-C58.

This sequence belongs to the beta-defensin family. As to expression, high expression in the testis. Gastric antrum exhibited relatively high levels. A lower expression is observed in uterus and neutrophils thyroid gland, lung, and kidney. No detectable expression in other tissues tested.

It is found in the secreted. In terms of biological role, has antimicrobial activity. Synergistic effects with lysozyme and DEFB103. In Homo sapiens (Human), this protein is Beta-defensin 104 (DEFB104A).